A 263-amino-acid polypeptide reads, in one-letter code: Small ribosomal subunit protein uS2 (263 aa).

S2 is modified (N-acetylserine). Positions 213–223 (NAAEEARAGAT) are enriched in low complexity. Positions 213 to 245 (NAAEEARAGATEETEEVVAEAETEWNTETNVED) are disordered. The segment covering 224 to 245 (EETEEVVAEAETEWNTETNVED) has biased composition (acidic residues).

Belongs to the universal ribosomal protein uS2 family. Component of the small ribosomal subunit. Mature ribosomes consist of a small (40S) and a large (60S) subunit. The 40S subunit contains about 33 different proteins and 1 molecule of RNA (18S). The 60S subunit contains about 49 different proteins and 3 molecules of RNA (25S, 5.8S and 5S). Interacts with RPS21.

It is found in the cytoplasm. Its function is as follows. Required for the assembly and/or stability of the 40S ribosomal subunit. Required for the processing of the 20S rRNA-precursor to mature 18S rRNA in a late step of the maturation of 40S ribosomal subunits. The sequence is that of Small ribosomal subunit protein uS2 from Clavispora lusitaniae (strain ATCC 42720) (Yeast).